The primary structure comprises 164 residues: Cyanate hydratase (164 aa).

Residues arginine 90, glutamate 93, and serine 116 contribute to the active site.

This sequence belongs to the cyanase family.

The catalysed reaction is cyanate + hydrogencarbonate + 3 H(+) = NH4(+) + 2 CO2. Catalyzes the reaction of cyanate with bicarbonate to produce ammonia and carbon dioxide. The chain is Cyanate hydratase from Vitis vinifera (Grape).